The sequence spans 453 residues: Argininosuccinate lyase (453 aa).

Belongs to the lyase 1 family. Argininosuccinate lyase subfamily.

It is found in the cytoplasm. The enzyme catalyses 2-(N(omega)-L-arginino)succinate = fumarate + L-arginine. It functions in the pathway amino-acid biosynthesis; L-arginine biosynthesis; L-arginine from L-ornithine and carbamoyl phosphate: step 3/3. This is Argininosuccinate lyase from Shewanella loihica (strain ATCC BAA-1088 / PV-4).